The primary structure comprises 214 residues: Probable GTP-binding protein EngB (214 aa).

One can recognise an EngB-type G domain in the interval 24 to 199 (GGYEVAFAGR…RGIVGGWLGL (176 aa)). Residues 32-39 (GRSNAGKS), 59-63 (GRTQQ), 77-80 (DLPG), 144-147 (TKAD), and 178-180 (YSG) each bind GTP. The Mg(2+) site is built by serine 39 and threonine 61.

The protein belongs to the TRAFAC class TrmE-Era-EngA-EngB-Septin-like GTPase superfamily. EngB GTPase family. Mg(2+) serves as cofactor.

Its function is as follows. Necessary for normal cell division and for the maintenance of normal septation. The polypeptide is Probable GTP-binding protein EngB (Xanthomonas axonopodis pv. citri (strain 306)).